Here is a 757-residue protein sequence, read N- to C-terminus: Probable inorganic carbon transporter subunit DabA (757 aa).

Cys-321, Asp-323, His-475, and Cys-490 together coordinate Zn(2+).

This sequence belongs to the inorganic carbon transporter (TC 9.A.2) DabA family. Forms a complex with DabB. Requires Zn(2+) as cofactor.

The protein localises to the cell inner membrane. Part of an energy-coupled inorganic carbon pump. The protein is Probable inorganic carbon transporter subunit DabA of Idiomarina loihiensis (strain ATCC BAA-735 / DSM 15497 / L2-TR).